The sequence spans 462 residues: Acetate--CoA ligase [ADP-forming] I subunit alpha (462 aa).

This sequence belongs to the acetate CoA ligase alpha subunit family. In terms of assembly, heterotetramer of two alpha and two beta subunits.

It is found in the cytoplasm. The catalysed reaction is acetate + ATP + CoA = acetyl-CoA + ADP + phosphate. With respect to regulation, activity is dependent on magnesium. Its function is as follows. Catalyzes the reversible formation of acetate and ATP from acetyl-CoA by using ADP and phosphate. Can use other substrates such as isobutyryl-CoA, propionyl-CoA and butyryl-CoA, but not indoleacetyl-CoA, phenylacetyl-CoA or succinyl-CoA. Seems to be involved primarily in the conversion of acetyl-CoA to acetate. Participates in the degradation of branched-chain amino acids via branched-chain-acyl-CoA esters. This chain is Acetate--CoA ligase [ADP-forming] I subunit alpha, found in Pyrococcus furiosus (strain ATCC 43587 / DSM 3638 / JCM 8422 / Vc1).